The chain runs to 341 residues: Anthranilate phosphoribosyltransferase (341 aa).

5-phospho-alpha-D-ribose 1-diphosphate contacts are provided by residues Gly-79, 82 to 83, Thr-87, 89 to 92, 107 to 115, and Ser-119; these read GD, NIST, and KHGNRAATS. Residue Gly-79 coordinates anthranilate. Residue Ser-91 coordinates Mg(2+). Asn-110 contacts anthranilate. An anthranilate-binding site is contributed by Arg-165. Residues Asp-224 and Glu-225 each coordinate Mg(2+).

It belongs to the anthranilate phosphoribosyltransferase family. In terms of assembly, homodimer. Mg(2+) serves as cofactor.

The catalysed reaction is N-(5-phospho-beta-D-ribosyl)anthranilate + diphosphate = 5-phospho-alpha-D-ribose 1-diphosphate + anthranilate. It participates in amino-acid biosynthesis; L-tryptophan biosynthesis; L-tryptophan from chorismate: step 2/5. Catalyzes the transfer of the phosphoribosyl group of 5-phosphorylribose-1-pyrophosphate (PRPP) to anthranilate to yield N-(5'-phosphoribosyl)-anthranilate (PRA). The chain is Anthranilate phosphoribosyltransferase from Symbiobacterium thermophilum (strain DSM 24528 / JCM 14929 / IAM 14863 / T).